We begin with the raw amino-acid sequence, 324 residues long: Probable peptidylglycine alpha-hydroxylating monooxygenase 1 (324 aa).

Positions Met1–Ala22 are cleaved as a signal peptide. 2 cysteine pairs are disulfide-bonded: Cys41–Cys85 and Cys73–Cys101. Cu cation contacts are provided by His66 and His67. Residue His142 coordinates Cu cation. Asn182 carries an N-linked (GlcNAc...) asparagine glycan. Residues His207, His209, and Met284 each contribute to the Cu cation site. Residues Cys264 and Cys285 are joined by a disulfide bond.

This sequence belongs to the copper type II ascorbate-dependent monooxygenase family. Cu(2+) is required as a cofactor.

The protein resides in the secreted. The enzyme catalyses a [peptide]-C-terminal glycine + 2 L-ascorbate + O2 = a [peptide]-C-terminal (2S)-2-hydroxyglycine + 2 monodehydro-L-ascorbate radical + H2O. Monooxygenase that catalyzes an essential reaction in C-terminal alpha-amidation of peptides. Produces an unstable peptidyl(2-hydroxyglycine) intermediate. C-terminal amidation of peptides such as neuropeptides is essential for full biological activity. The protein is Probable peptidylglycine alpha-hydroxylating monooxygenase 1 of Caenorhabditis elegans.